The primary structure comprises 1576 residues: ABC transporter ALT5 (1576 aa).

10 helical membrane-spanning segments follow: residues 27–47 (LKFE…ILAV), 72–92 (ILGF…TQGT), 99–119 (GLFL…VIVC), 267–287 (LPLS…PILP), 289–309 (LVLI…TGFL), 321–341 (GLIG…SLYW), 387–407 (VLAG…AVIV), 417–437 (GFFA…ATVG), 500–520 (ITAM…TLAA), and 525–545 (VATS…APLG). Residues 289-556 (LVLIGLSISQ…LFQSVAPLMS (268 aa)) enclose the ABC transmembrane type-1 1 domain. The ABC transporter 1 domain occupies 602–834 (FRVVNGSFRW…NGGYLQSLCV (233 aa)). 636 to 643 (GPVGSGKS) is a binding site for ATP. Helical transmembrane passes span 915-935 (VVAL…FAFP), 957-977 (FWVG…FLTM), 981-1001 (VTSI…AAIM), 1035-1054 (LIQF…VLAA), 1060-1078 (AAMY…KLYL), 1142-1162 (WLLF…VTLV), and 1171-1191 (GFAG…ASAM). The 281-residue stretch at 919–1199 (VAFLASAICY…AMQSYAKLET (281 aa)) folds into the ABC transmembrane type-1 2 domain. The 332-residue stretch at 1236 to 1567 (IKLDGVSASY…SHSKFRALCE (332 aa)) folds into the ABC transporter 2 domain. 1278–1285 (GRSGSGKS) contacts ATP.

It belongs to the ABC transporter superfamily. ABCC family. Conjugate transporter (TC 3.A.1.208) subfamily.

It localises to the cell membrane. ABC transporter that may provide the dual role AAL-toxin export and self-protection by allowing the fungus to evade the harmful effect of its own AAL-toxin production. This is ABC transporter ALT5 from Alternaria alternata (Alternaria rot fungus).